Here is a 721-residue protein sequence, read N- to C-terminus: Cytosolic carboxypeptidase 2 (721 aa).

Residues 43–71 (TASDMINSSSPSESSDSNLEEEQEESKPC) form a disordered region. The segment covering 50 to 59 (SSSPSESSDS) has biased composition (low complexity). The Peptidase M14 domain occupies 334 to 605 (YPYTYSKLQH…CFCDTLLDFC (272 aa)). Residues histidine 400, glutamate 403, and histidine 496 each contribute to the Zn(2+) site. Glutamate 569 functions as the Proton donor/acceptor in the catalytic mechanism. The tract at residues 645–721 (DIESSTSGSN…TQHGDTEDQS (77 aa)) is disordered. The span at 647-660 (ESSTSGSNSTESDG) shows a compositional bias: low complexity. A compositionally biased stretch (basic residues) spans 672–688 (GKKKLLRSRKERNRLRQ). Residues 703–714 (YSCQTLNATTQH) show a composition bias toward polar residues.

This sequence belongs to the peptidase M14 family. Zn(2+) serves as cofactor.

The protein localises to the cytoplasm. It is found in the cytosol. The protein resides in the cytoskeleton. It localises to the microtubule organizing center. Its subcellular location is the centrosome. The protein localises to the centriole. It is found in the cilium basal body. It carries out the reaction (L-glutamyl)(n+1)-gamma-L-glutamyl-L-glutamyl-[protein] + H2O = (L-glutamyl)(n)-gamma-L-glutamyl-L-glutamyl-[protein] + L-glutamate. Its function is as follows. Metallocarboxypeptidase that mediates deglutamylation of target proteins. Catalyzes the deglutamylation of polyglutamate side chains generated by post-translational polyglutamylation in proteins such as tubulins. Also removes gene-encoded polyglutamates from the carboxy-terminus of target proteins such as MYLK. Does not show detyrosinase or deglycylase activities from the carboxy-terminus of tubulin. In terms of biological role, metallocarboxypeptidase that mediates deglutamylation of tubulin and non-tubulin target proteins. Catalyzes the removal of polyglutamate side chains present on the gamma-carboxyl group of glutamate residues within the C-terminal tail of tubulin protein. Specifically cleaves tubulin long-side-chains, while it is not able to remove the branching point glutamate. Also catalyzes the removal of polyglutamate residues from the carboxy-terminus of non-tubulin proteins. The chain is Cytosolic carboxypeptidase 2 (zte25) from Danio rerio (Zebrafish).